Here is a 455-residue protein sequence, read N- to C-terminus: Mitochondrial distribution and morphology protein 10 (455 aa).

Disordered regions lie at residues 216 to 249, 278 to 311, and 377 to 399; these read WETT…EDAV, IRFS…PSPA, and PRSS…PLGE. Positions 217 to 227 are enriched in low complexity; the sequence is ETTNGENGTNT. Positions 228–237 are enriched in polar residues; it reads SAPGNASNSR. The segment covering 291-301 has biased composition (pro residues); it reads AQIPPPSPFTP.

The protein belongs to the MDM10 family. As to quaternary structure, component of the ER-mitochondria encounter structure (ERMES) or MDM complex, composed of MMM1, MDM10, MDM12 and MDM34. Associates with the mitochondrial outer membrane sorting assembly machinery SAM(core) complex.

Its subcellular location is the mitochondrion outer membrane. Functionally, component of the ERMES/MDM complex, which serves as a molecular tether to connect the endoplasmic reticulum and mitochondria. Components of this complex are involved in the control of mitochondrial shape and protein biogenesis and may function in phospholipid exchange. MDM10 is involved in the late assembly steps of the general translocase of the mitochondrial outer membrane (TOM complex). Functions in the TOM40-specific route of the assembly of outer membrane beta-barrel proteins, including the association of TOM40 with the receptor TOM22 and small TOM proteins. Can associate with the SAM(core) complex as well as the MDM12-MMM1 complex, both involved in late steps of the major beta-barrel assembly pathway, that is responsible for biogenesis of all outer membrane beta-barrel proteins. May act as a switch that shuttles between both complexes and channels precursor proteins into the TOM40-specific pathway. Plays a role in mitochondrial morphology and in the inheritance of mitochondria. The polypeptide is Mitochondrial distribution and morphology protein 10 (Coprinopsis cinerea (strain Okayama-7 / 130 / ATCC MYA-4618 / FGSC 9003) (Inky cap fungus)).